The sequence spans 270 residues: Hemin import ATP-binding protein HmuV (270 aa).

The 238-residue stretch at 5 to 242 (LEAEAATYSV…SLINRVFDIE (238 aa)) folds into the ABC transporter domain. 37–44 (GPNGAGKS) serves as a coordination point for ATP.

This sequence belongs to the ABC transporter superfamily. Heme (hemin) importer (TC 3.A.1.14.5) family. As to quaternary structure, the complex is composed of two ATP-binding proteins (HmuV), two transmembrane proteins (HmuU) and a solute-binding protein (HmuT).

It localises to the cell inner membrane. Its function is as follows. Part of the ABC transporter complex HmuTUV involved in hemin import. Responsible for energy coupling to the transport system. The protein is Hemin import ATP-binding protein HmuV of Rhodopseudomonas palustris (strain BisA53).